Consider the following 547-residue polypeptide: Chaperonin GroEL 2 (547 aa).

Residues 30 to 33, K51, 87 to 91, G415, 479 to 481, and D495 each bind ATP; these read TLGP, DGTTT, and NAA. The segment at 526–547 is disordered; sequence KEESAAPAGGGMGGMGGMGGMM. Positions 533–547 are enriched in gly residues; the sequence is AGGGMGGMGGMGGMM.

Belongs to the chaperonin (HSP60) family. In terms of assembly, forms a cylinder of 14 subunits composed of two heptameric rings stacked back-to-back. Interacts with the co-chaperonin GroES.

The protein resides in the cytoplasm. The catalysed reaction is ATP + H2O + a folded polypeptide = ADP + phosphate + an unfolded polypeptide.. In terms of biological role, together with its co-chaperonin GroES, plays an essential role in assisting protein folding. The GroEL-GroES system forms a nano-cage that allows encapsulation of the non-native substrate proteins and provides a physical environment optimized to promote and accelerate protein folding. In Anaeromyxobacter sp. (strain Fw109-5), this protein is Chaperonin GroEL 2.